Reading from the N-terminus, the 1179-residue chain is Dynein axonemal assembly factor 9 (1179 aa).

As to quaternary structure, interacts with ARL3.

Functionally, may act as an effector for ARL3. The protein is Dynein axonemal assembly factor 9 of Mus musculus (Mouse).